The chain runs to 801 residues: MGFSPFLDECRAEGLWPIGPSCNKIISFGVYTFFIVVNFIVLCIPNSNSANNNYRRMTDDDASSTSKLTISKILSICTIFAVICQSIFYFCFTFYFHPYTHLLLAFCVSKLFFWILSLCSFSKWRNQPSTPISLAFAFSAALLIHCIPLTDWKKYFEPTSKNRGDLTFYIIELALVTVVFFFTIVTGLFNFSGCSSRESAWNNLSKKVVTVAPYIWPTKSISLQLRVVFCLFLLIIGRLINVSLPILSKWIVDELATPDTFQYSLLFLATFLKFLQGNGAMGGFLNTVRTYLWIPIQQYTTRELEVELFKHLHSLSLRWHLSRKTGQVLRVMDRGTSSVNNILNYILFNVVPTIADIVIAVIFFFSAFNAYFGLIVFGTMALYLTVTISITEWRTQYIREANEKDNATSAIATDSLINYETVKYYGNEEFEVNRFKNAIESYQVTEWKTQASLAFLNCLQNAIIGIGMIGGSVFVVYMIVHEKTLTVGDYVLFTTYLLQLYTPLNFFGTIYRVIQKAFVDMENMFDLMNDEVEVKDLPHALPYTDPRGTISVKNLTFEYNTGLPVIKNISFEIGNGQTVALVGSSGSGKSTLIRLLFRLFESTEGSIEFDGIDVRNYTMHSLRQQIGIVPQDTVLFNDTIMYNIRFGRPDASDEEVIEAAKAAMIHEKITSLPEGYATMVGERGLKLSGGEKQRVAIARTILKKPQFIFLDEATSALDTPTERAIQKCLEKLCKSRTGVVVAHRLSTVVNADLILVLDKGIILERGNHKELLAQQGTYASMWEAQIAEQRAKSIELGEELP.

Topologically, residues 1 to 24 (MGFSPFLDECRAEGLWPIGPSCNK) are lumenal. A helical membrane pass occupies residues 25–45 (IISFGVYTFFIVVNFIVLCIP). The Cytoplasmic segment spans residues 46-75 (NSNSANNNYRRMTDDDASSTSKLTISKILS). Residues 76-96 (ICTIFAVICQSIFYFCFTFYF) traverse the membrane as a helical segment. The Lumenal portion of the chain corresponds to 97–101 (HPYTH). A helical membrane pass occupies residues 102 to 122 (LLLAFCVSKLFFWILSLCSFS). Over 123 to 129 (KWRNQPS) the chain is Cytoplasmic. Residues 130–150 (TPISLAFAFSAALLIHCIPLT) form a helical membrane-spanning segment. The Lumenal portion of the chain corresponds to 151–167 (DWKKYFEPTSKNRGDLT). A helical membrane pass occupies residues 168–188 (FYIIELALVTVVFFFTIVTGL). Residues 189–226 (FNFSGCSSRESAWNNLSKKVVTVAPYIWPTKSISLQLR) are Cytoplasmic-facing. A helical membrane pass occupies residues 227 to 247 (VVFCLFLLIIGRLINVSLPIL). The ABC transmembrane type-1 domain occupies 227–516 (VVFCLFLLII…FGTIYRVIQK (290 aa)). Topologically, residues 248 to 264 (SKWIVDELATPDTFQYS) are lumenal. A helical transmembrane segment spans residues 265 to 285 (LLFLATFLKFLQGNGAMGGFL). Topologically, residues 286–341 (NTVRTYLWIPIQQYTTRELEVELFKHLHSLSLRWHLSRKTGQVLRVMDRGTSSVNN) are cytoplasmic. The chain crosses the membrane as a helical span at residues 342–364 (ILNYILFNVVPTIADIVIAVIFF). The Lumenal portion of the chain corresponds to 365 to 371 (FSAFNAY). The chain crosses the membrane as a helical span at residues 372–390 (FGLIVFGTMALYLTVTISI). The Cytoplasmic segment spans residues 391–461 (TEWRTQYIRE…SLAFLNCLQN (71 aa)). A helical transmembrane segment spans residues 462–482 (AIIGIGMIGGSVFVVYMIVHE). Residues 483-489 (KTLTVGD) are Lumenal-facing. Residues 490-510 (YVLFTTYLLQLYTPLNFFGTI) traverse the membrane as a helical segment. Topologically, residues 511–801 (YRVIQKAFVD…KSIELGEELP (291 aa)) are cytoplasmic. One can recognise an ABC transporter domain in the interval 550–784 (ISVKNLTFEY…QGTYASMWEA (235 aa)). 583 to 590 (GSSGSGKS) contributes to the ATP binding site.

The protein belongs to the ABC transporter superfamily. ABCB family. Heavy Metal importer (TC 3.A.1.210) subfamily. Expressed in coelomocytes, as well as in head and tail neurons, and in the intestinal cells.

It is found in the vacuole membrane. The protein localises to the early endosome. The protein resides in the late endosome. It localises to the recycling endosome. May play a pivotal role in the detoxification of heavy metals such as cadmium but do not depend exclusively on phytochelatins (PC) synthesis. This Caenorhabditis elegans protein is Heavy metal tolerance factor 1.